The following is a 295-amino-acid chain: Protoheme IX farnesyltransferase (295 aa).

9 helical membrane passes run 31–51 (GLVMITCAGGMWLAPGQIGAA), 54–74 (VLTVLATAVVVGAANALNCYL), 98–118 (FVALGLGIAAPAFAIPILSLA), 121–141 (GLTALLALVALLTYVLVYTPM), 147–167 (TALFVGAVPGAIPPLMGWTSV), 173–193 (AGGLALFGLLFAWQLPHFLAI), 220–240 (LWMALTTILLLPASLALVPLG), 245–265 (GYAITAAVLGLALSAYAISGI), and 273–293 (ARTFFLGTLVHLTVLFVALFL).

It belongs to the UbiA prenyltransferase family. Protoheme IX farnesyltransferase subfamily.

The protein resides in the cell inner membrane. It carries out the reaction heme b + (2E,6E)-farnesyl diphosphate + H2O = Fe(II)-heme o + diphosphate. It functions in the pathway porphyrin-containing compound metabolism; heme O biosynthesis; heme O from protoheme: step 1/1. Converts heme B (protoheme IX) to heme O by substitution of the vinyl group on carbon 2 of heme B porphyrin ring with a hydroxyethyl farnesyl side group. This is Protoheme IX farnesyltransferase from Anaeromyxobacter dehalogenans (strain 2CP-C).